The chain runs to 1496 residues: DNA-directed RNA polymerase subunit beta' (1496 aa).

Positions 67, 69, 82, and 85 each coordinate Zn(2+). Mg(2+)-binding residues include D499, D501, and D503. Residues C867, C943, C950, and C953 each contribute to the Zn(2+) site.

It belongs to the RNA polymerase beta' chain family. As to quaternary structure, the RNAP catalytic core consists of 2 alpha, 1 beta, 1 beta' and 1 omega subunit. When a sigma factor is associated with the core the holoenzyme is formed, which can initiate transcription. The cofactor is Mg(2+). Zn(2+) is required as a cofactor.

It catalyses the reaction RNA(n) + a ribonucleoside 5'-triphosphate = RNA(n+1) + diphosphate. DNA-dependent RNA polymerase catalyzes the transcription of DNA into RNA using the four ribonucleoside triphosphates as substrates. This Chlorobium limicola (strain DSM 245 / NBRC 103803 / 6330) protein is DNA-directed RNA polymerase subunit beta'.